Reading from the N-terminus, the 330-residue chain is D-cysteine desulfhydrase (330 aa).

Lysine 52 carries the N6-(pyridoxal phosphate)lysine modification.

This sequence belongs to the ACC deaminase/D-cysteine desulfhydrase family. Homodimer. Pyridoxal 5'-phosphate is required as a cofactor.

It carries out the reaction D-cysteine + H2O = hydrogen sulfide + pyruvate + NH4(+) + H(+). Catalyzes the alpha,beta-elimination reaction of D-cysteine and of several D-cysteine derivatives. It could be a defense mechanism against D-cysteine. This is D-cysteine desulfhydrase from Yersinia pseudotuberculosis serotype O:1b (strain IP 31758).